Here is a 143-residue protein sequence, read N- to C-terminus: MAKKIQAYIKLQVKAGQANPSPPVGPALGQHGVNIMEFCKAFNARTQGQEPGLPTPVIITVYSDRSFTFETKSTPASVLLKKAAGLTSGSARPNTVKVGTVTRAQLEDIAKAKQADLTAADLDAAVRTIAGSARSMGLNVEGV.

The protein belongs to the universal ribosomal protein uL11 family. Part of the ribosomal stalk of the 50S ribosomal subunit. Interacts with L10 and the large rRNA to form the base of the stalk. L10 forms an elongated spine to which L12 dimers bind in a sequential fashion forming a multimeric L10(L12)X complex. One or more lysine residues are methylated.

Functionally, forms part of the ribosomal stalk which helps the ribosome interact with GTP-bound translation factors. This Pseudomonas entomophila (strain L48) protein is Large ribosomal subunit protein uL11.